A 77-amino-acid polypeptide reads, in one-letter code: Putative membrane protein insertion efficiency factor (77 aa).

The protein belongs to the UPF0161 family.

Its subcellular location is the cell membrane. Its function is as follows. Could be involved in insertion of integral membrane proteins into the membrane. This Geobacillus sp. (strain WCH70) protein is Putative membrane protein insertion efficiency factor.